The primary structure comprises 445 residues: UDP-N-acetylmuramate--L-alanine ligase (445 aa).

108 to 114 (GSDGKTT) is an ATP binding site.

This sequence belongs to the MurCDEF family.

The protein localises to the cytoplasm. The enzyme catalyses UDP-N-acetyl-alpha-D-muramate + L-alanine + ATP = UDP-N-acetyl-alpha-D-muramoyl-L-alanine + ADP + phosphate + H(+). Its pathway is cell wall biogenesis; peptidoglycan biosynthesis. Cell wall formation. The chain is UDP-N-acetylmuramate--L-alanine ligase from Pseudothermotoga lettingae (strain ATCC BAA-301 / DSM 14385 / NBRC 107922 / TMO) (Thermotoga lettingae).